We begin with the raw amino-acid sequence, 643 residues long: Extracellular metalloproteinase 4 (643 aa).

The signal sequence occupies residues Met1–Ala18. Residues His19–Ala254 constitute a propeptide that is removed on maturation. Residues Thr47–Asp57 are compositionally biased toward basic and acidic residues. The tract at residues Thr47–Ser71 is disordered. A compositionally biased stretch (polar residues) spans Phe60 to Ser71. 2 N-linked (GlcNAc...) asparagine glycosylation sites follow: Asn271 and Asn420. His437 is a Zn(2+) binding site. Residue Glu438 is part of the active site. Residue His441 coordinates Zn(2+). Asn510 carries an N-linked (GlcNAc...) asparagine glycan.

Belongs to the peptidase M36 family. The cofactor is Zn(2+).

It localises to the secreted. Functionally, secreted metalloproteinase probably acting as a virulence factor. The polypeptide is Extracellular metalloproteinase 4 (MEP4) (Trichophyton equinum (Horse ringworm fungus)).